The following is a 229-amino-acid chain: Cytidylate kinase (229 aa).

12-20 (GPSGVGKST) contacts ATP.

The protein belongs to the cytidylate kinase family. Type 1 subfamily.

The protein localises to the cytoplasm. The catalysed reaction is CMP + ATP = CDP + ADP. It carries out the reaction dCMP + ATP = dCDP + ADP. The protein is Cytidylate kinase of Mesomycoplasma hyopneumoniae (strain 232) (Mycoplasma hyopneumoniae).